The chain runs to 317 residues: MSSNKVTAAIIDYLKQAITTGSISEEEKESLEVAAQCIQDSFKIKPEEIKPKSGDRLVAAFEEYEKLHPVEEDSTAHVNKEEAEKLKLEGNNAIAAKDYQKALDLYTKAIEIDPTSPVYYSNRAAAYNQLGQFENAVEDALTCLSLDPHHARAFGRLGRAKLSLGDAAAAADAYKKGLDFDPNNEVLKRGLEAANKQLNQPSDSSATSGADQARTSAGAAPDLGSIFGGGMPDLGSLMNNPAVMNMARNLMQSGALNNIMNDPNIANMARNFQSGGGMPDLSSLANNPQLQNLARNFMNNNNNGNTDNNNQGNPPPQ.

4 TPR repeats span residues Leu14–Glu48, Ala83–Ser116, Val118–His150, and Ala151–Asn184. Residues Leu198–Thr215 are compositionally biased toward polar residues. Disordered stretches follow at residues Leu198 to Gly224 and Met298 to Gln317.

This sequence belongs to the SGT family.

It localises to the cytoplasm. Its subcellular location is the nucleus. Its function is as follows. Co-chaperone that binds to the molecular chaperone Hsp70 and regulates Hsp70 ATPase activity. This Schizosaccharomyces pombe (strain 972 / ATCC 24843) (Fission yeast) protein is Small glutamine-rich tetratricopeptide repeat-containing protein 2 (sgt2).